Reading from the N-terminus, the 270-residue chain is MEQFYYVLKYLILGLFQGLTEPIPISSSGHLVLAQHLLGLKIEGFSFELLVNSASLLAVLLIYRNDLIRLTKNGLSYIFTRAEDAKSDFFFIIYLVIATIPAGVIGVLFKDYIDQYLKGVKMVGISLLITAVGLWIIRNLRGRKNDGDLSMKDAIIVGLAQACALIPGISRSGATIVAAMLLGMKQETALRFSFLLYIPVSLGGLLLSITDIANDPNLDTLFVPYVVAFIATFIMTYISLKWFMNIMAKGNLKYFSFYCIIVGVLTLIFL.

A run of 7 helical transmembrane segments spans residues 5–25, 42–62, 89–109, 117–137, 192–212, 220–240, and 250–270; these read YYVL…PIPI, IEGF…VLLI, FFFI…GVLF, LKGV…LWII, FSFL…ITDI, TLFV…YISL, and GNLK…LIFL.

The protein belongs to the UppP family.

It localises to the cell membrane. The enzyme catalyses di-trans,octa-cis-undecaprenyl diphosphate + H2O = di-trans,octa-cis-undecaprenyl phosphate + phosphate + H(+). In terms of biological role, catalyzes the dephosphorylation of undecaprenyl diphosphate (UPP). Confers resistance to bacitracin. This Bacillus cereus (strain ATCC 14579 / DSM 31 / CCUG 7414 / JCM 2152 / NBRC 15305 / NCIMB 9373 / NCTC 2599 / NRRL B-3711) protein is Undecaprenyl-diphosphatase 1.